Consider the following 248-residue polypeptide: Proteasome subunit alpha type-7 (248 aa).

Ser-130 carries O-linked (GlcNAc) serine glycosylation. Tyr-153 carries the post-translational modification Phosphotyrosine. Lys-227 is subject to N6-acetyllysine.

The protein belongs to the peptidase T1A family. As to quaternary structure, the 26S proteasome consists of a 20S proteasome core and two 19S regulatory subunits. The 20S proteasome core is a barrel-shaped complex made of 28 subunits that are arranged in four stacked rings. The two outer rings are each formed by seven alpha subunits, and the two inner rings are formed by seven beta subunits. The proteolytic activity is exerted by three beta-subunits PSMB5, PSMB6 and PSMB7. PSMA7 interacts directly with the PSMG1-PSMG2 heterodimer which promotes 20S proteasome assembly. Interacts with HIF1A. Interacts with RAB7A. Interacts with PRKN. Interacts with ABL1 and ABL2. Interacts with EMAP2. Interacts with MAVS.

The protein localises to the cytoplasm. It localises to the nucleus. Its function is as follows. Component of the 20S core proteasome complex involved in the proteolytic degradation of most intracellular proteins. This complex plays numerous essential roles within the cell by associating with different regulatory particles. Associated with two 19S regulatory particles, forms the 26S proteasome and thus participates in the ATP-dependent degradation of ubiquitinated proteins. The 26S proteasome plays a key role in the maintenance of protein homeostasis by removing misfolded or damaged proteins that could impair cellular functions, and by removing proteins whose functions are no longer required. Associated with the PA200 or PA28, the 20S proteasome mediates ubiquitin-independent protein degradation. This type of proteolysis is required in several pathways including spermatogenesis (20S-PA200 complex) or generation of a subset of MHC class I-presented antigenic peptides (20S-PA28 complex). Inhibits the transactivation function of HIF-1A under both normoxic and hypoxia-mimicking conditions. The interaction with EMAP2 increases the proteasome-mediated HIF-1A degradation under the hypoxic conditions. Plays a role in hepatitis C virus internal ribosome entry site-mediated translation. Mediates nuclear translocation of the androgen receptor (AR) and thereby enhances androgen-mediated transactivation. Promotes MAVS degradation and thereby negatively regulates MAVS-mediated innate immune response. The protein is Proteasome subunit alpha type-7 (PSMA7) of Bos taurus (Bovine).